The sequence spans 334 residues: DNA-directed RNA polymerase subunit alpha (334 aa).

The tract at residues 1–233 (MADQTISNVL…NLFTPLVSQE (233 aa)) is alpha N-terminal domain (alpha-NTD). The alpha C-terminal domain (alpha-CTD) stretch occupies residues 263-334 (DNENSYNLYN…QLKKRFKIQL (72 aa)).

The protein belongs to the RNA polymerase alpha chain family. In plastids the minimal PEP RNA polymerase catalytic core is composed of four subunits: alpha, beta, beta', and beta''. When a (nuclear-encoded) sigma factor is associated with the core the holoenzyme is formed, which can initiate transcription.

Its subcellular location is the plastid. The protein localises to the chloroplast. The catalysed reaction is RNA(n) + a ribonucleoside 5'-triphosphate = RNA(n+1) + diphosphate. Functionally, DNA-dependent RNA polymerase catalyzes the transcription of DNA into RNA using the four ribonucleoside triphosphates as substrates. This chain is DNA-directed RNA polymerase subunit alpha, found in Chaetosphaeridium globosum (Charophycean green alga).